A 465-amino-acid chain; its full sequence is Trigger factor (465 aa).

Residues 163–248 (GDVINFNFKG…INKIKENQPA (86 aa)) enclose the PPIase FKBP-type domain. The tract at residues 431–465 (EIVNKNQNDNEIEQDKEQKDNNEEKIKQENNLENK) is disordered. Residues 443–465 (EQDKEQKDNNEEKIKQENNLENK) are compositionally biased toward basic and acidic residues.

It belongs to the FKBP-type PPIase family. Tig subfamily.

It localises to the cytoplasm. It catalyses the reaction [protein]-peptidylproline (omega=180) = [protein]-peptidylproline (omega=0). In terms of biological role, involved in protein export. Acts as a chaperone by maintaining the newly synthesized protein in an open conformation. Functions as a peptidyl-prolyl cis-trans isomerase. The chain is Trigger factor from Mesomycoplasma hyopneumoniae (strain 232) (Mycoplasma hyopneumoniae).